The sequence spans 339 residues: Ketol-acid reductoisomerase (NADP(+)) (339 aa).

The 182-residue stretch at 1–182 (MRVYYDRDAD…GGGRAGIIET (182 aa)) folds into the KARI N-terminal Rossmann domain. Residues 24 to 27 (YGSQ), Arg-48, Ser-51, Ser-53, and 83 to 86 (DELQ) each bind NADP(+). His-108 is an active-site residue. Gly-134 provides a ligand contact to NADP(+). A KARI C-terminal knotted domain is found at 183-328 (TFKEECETDL…AKLRDMMPWI (146 aa)). Residues Asp-191, Glu-195, Glu-227, and Glu-231 each contribute to the Mg(2+) site. Ser-252 contacts substrate.

The protein belongs to the ketol-acid reductoisomerase family. It depends on Mg(2+) as a cofactor.

It catalyses the reaction (2R)-2,3-dihydroxy-3-methylbutanoate + NADP(+) = (2S)-2-acetolactate + NADPH + H(+). It carries out the reaction (2R,3R)-2,3-dihydroxy-3-methylpentanoate + NADP(+) = (S)-2-ethyl-2-hydroxy-3-oxobutanoate + NADPH + H(+). The protein operates within amino-acid biosynthesis; L-isoleucine biosynthesis; L-isoleucine from 2-oxobutanoate: step 2/4. It participates in amino-acid biosynthesis; L-valine biosynthesis; L-valine from pyruvate: step 2/4. Involved in the biosynthesis of branched-chain amino acids (BCAA). Catalyzes an alkyl-migration followed by a ketol-acid reduction of (S)-2-acetolactate (S2AL) to yield (R)-2,3-dihydroxy-isovalerate. In the isomerase reaction, S2AL is rearranged via a Mg-dependent methyl migration to produce 3-hydroxy-3-methyl-2-ketobutyrate (HMKB). In the reductase reaction, this 2-ketoacid undergoes a metal-dependent reduction by NADPH to yield (R)-2,3-dihydroxy-isovalerate. This is Ketol-acid reductoisomerase (NADP(+)) from Bradyrhizobium diazoefficiens (strain JCM 10833 / BCRC 13528 / IAM 13628 / NBRC 14792 / USDA 110).